Consider the following 889-residue polypeptide: Phosphatidylinositol 3-kinase VPS34 (889 aa).

The C2 PI3K-type domain maps to 34–184 (ASEKLIDPQL…EWIDELVLKK (151 aa)). The PIK helical domain maps to 298–540 (SDKHVKPDAK…ESFLSRLNSN (243 aa)). Positions 607 to 873 (MIDQCNVFKS…LINDSVNALL (267 aa)) constitute a PI3K/PI4K catalytic domain. The segment at 613 to 619 (VFKSSLS) is G-loop. Residues 742–750 (GVGDRHLDN) are catalytic loop. Residues 761-782 (HADFGYILGQDPKPFPPLMKLP) form an activation loop region.

It belongs to the PI3/PI4-kinase family. Type III PI4K subfamily. Component of the autophagy-specific VPS34 PI3-kinase complex I composed of VPS15, VPS30, VPS34, ATG14 and ATG38; and of the VPS34 PI3-kinase complex II composed of VPS15, VPS30, VPS34 and VPS38. Autophosphorylated.

It localises to the golgi apparatus. The protein localises to the trans-Golgi network membrane. The protein resides in the endosome membrane. It catalyses the reaction a 1,2-diacyl-sn-glycero-3-phospho-(1D-myo-inositol) + ATP = a 1,2-diacyl-sn-glycero-3-phospho-(1D-myo-inositol-3-phosphate) + ADP + H(+). Functionally, multifunctional phosphatidylinositol 3-kinase that plays a role in signaling in modulation of host immune response, intracellular survival and virulence. Catalytic subunit of the autophagy-specific VPS34 PI3-kinase complex I essential to recruit the ATG8-phosphatidylinositol conjugate and the ATG12-ATG5 conjugate to the pre-autophagosomal structure. Also involved in endosome-to-Golgi retrograde transport as part of the VPS34 PI3-kinase complex II. This second complex is required for the endosome-to-Golgi retrieval of PEP1 and KEX2, and the recruitment of VPS5 and VPS7, two components of the retromer complex, to endosomal membranes (probably through the synthesis of a specific pool of phosphatidylinositol 3-phosphate recruiting the retromer to the endosomes). Finally, it might also be involved in ethanol tolerance and cell wall integrity. This is Phosphatidylinositol 3-kinase VPS34 from Candida glabrata (strain ATCC 2001 / BCRC 20586 / JCM 3761 / NBRC 0622 / NRRL Y-65 / CBS 138) (Yeast).